We begin with the raw amino-acid sequence, 140 residues long: Dehydratase ustZ (140 aa).

An EthD domain is found at 18-113 (PGISTEDYRN…GPDHEKFADT (96 aa)).

This sequence belongs to the tpcK family.

The enzyme catalyses naphtopyrone YWA1 = norrubrofusarin + H2O + H(+). Its pathway is secondary metabolite biosynthesis. Dehydratase; part of the gene cluster that mediates the biosynthesis of ustilaginoidins, dimeric gamma-naphthopyrones isolated from different fungal species. The first step in the biosynthesis of ustilaginoidins is the production of gamma-naphthopyrone precursor YWA1 by the non-reducing polyketide synthase ustP, via condensation of one acetyl-CoA starter unit with 6 malonyl-CoA units. YWA1 is then probably substrate of the ustZ to yield norrubrofusarin via a dehydration reaction. A key enzyme in the biosynthetic pathway is the laccase ustL, which catalyzes the oxidative dimerization of norrubrofusarin to ustilaginoidin A. It can produce the M- and P-atropisomers in varying amounts, depending on the reaction conditions. For the biosynthesis of 3-methylustilaginoid in derivatives such as chaetochromin A, a methylated derivative of YWA1 is required. The C-methylation is considered to be catalyzed by ustM, the phosphopantetheine attachment site of which indicates that it acts on the growing polyketide chain before release of the product. For the biosynthesis of chaetochromin A, it is assumed that saturation of the D2 double bond takes place before dimerization, and is probably catalyzed by an external reductase because no candidate gene was identified within the cluster. In Ustilaginoidea virens (Rice false smut fungus), this protein is Dehydratase ustZ.